The primary structure comprises 100 residues: Small ribosomal subunit protein bS20 (100 aa).

The disordered stretch occupies residues 79–100 (AAHQKSRLSAAVKQAIEPAPST).

The protein belongs to the bacterial ribosomal protein bS20 family.

In terms of biological role, binds directly to 16S ribosomal RNA. This Prochlorococcus marinus (strain MIT 9303) protein is Small ribosomal subunit protein bS20.